Consider the following 227-residue polypeptide: PKHD-type hydroxylase GDI1238/Gdia_1949 (227 aa).

In terms of domain architecture, Fe2OG dioxygenase spans 78 to 178 (RVVPPLFNRY…RLASFFWTQS (101 aa)). Fe cation is bound by residues histidine 96, aspartate 98, and histidine 159. Arginine 169 contributes to the 2-oxoglutarate binding site.

The cofactor is Fe(2+). L-ascorbate is required as a cofactor.

The protein is PKHD-type hydroxylase GDI1238/Gdia_1949 of Gluconacetobacter diazotrophicus (strain ATCC 49037 / DSM 5601 / CCUG 37298 / CIP 103539 / LMG 7603 / PAl5).